Consider the following 394-residue polypeptide: Envelope glycoprotein D (394 aa).

The signal sequence occupies residues 1–25 (MGGAAARLGAVILFVVIVGLHGVRS). The tract at residues 26 to 57 (KYALVDASLKMADPNRFRGKDLPVLDQLTDPP) is interaction with TNFRSF14. At 26-340 (KYALVDASLK…YHPPATPNNM (315 aa)) the chain is on the virion surface side. His64 is a binding site for Zn(2+). 3 disulfides stabilise this stretch: Cys91–Cys214, Cys131–Cys227, and Cys143–Cys152. N-linked (GlcNAc...) asparagine; by host glycosylation is found at Asn119 and Asn146. Asp240 contacts Zn(2+). Residues 261 to 305 (LKIAGWHGPKAPYTSTLLPPELSETPNATQPELAPEDPEDSALLE) are profusion. The tract at residues 275-301 (STLLPPELSETPNATQPELAPEDPEDS) is disordered. N-linked (GlcNAc...) asparagine; by host glycosylation is present at Asn287. The chain crosses the membrane as a helical span at residues 341-361 (GLIAGAVGGSLLAALVICGIV). Over 362–394 (YWMRRHTQKAPKRIRLPHIREDDQPSSHQPLFY) the chain is Intravirion. The interval 375–394 (IRLPHIREDDQPSSHQPLFY) is disordered.

Belongs to the herpesviridae glycoprotein D family. As to quaternary structure, homodimer. Interacts with host receptor TNFRSF14. Interacts with host receptor NECTIN1. Interacts (via profusion domain) with gB; this interaction occurs in the absence of gH/gL. Interacts (via profusion domain) with gH/gL heterodimer; this interaction occurs in the absence of gB. Associates with the gB-gH/gL-gD complex. Interacts (via C-terminus) with UL11 tegument protein. Interacts (via C-terminus) with VP22 tegument protein; this interaction has been demonstrated in other strains, but might be very weak since PubMed:19279114 has failed to see it. Interacts with host RSAD2.

The protein localises to the virion membrane. The protein resides in the host Golgi apparatus. Its function is as follows. Envelope glycoprotein that binds to the host cell entry receptors NECTIN1, TNFRSF14/HVEM and 3-O-sulfated heparan sulfate, promoting the virus entry into host cells. May trigger fusion with host membrane, by recruiting the fusion machinery composed of gB and gH/gL. The protein is Envelope glycoprotein D (gD) of Homo sapiens (Human).